The primary structure comprises 144 residues: Large ribosomal subunit protein uL15 (144 aa).

The disordered stretch occupies residues 1–53; that stretch reads MRLNTLSPAVGAKSAPKRVGRGIGSGLGKTAGRGHKGQKSRSGGGVRPGFEGG. Composition is skewed to gly residues over residues 21 to 31 and 42 to 52; these read RGIGSGLGKTA and SGGGVRPGFEG.

The protein belongs to the universal ribosomal protein uL15 family. In terms of assembly, part of the 50S ribosomal subunit.

Its function is as follows. Binds to the 23S rRNA. This Shewanella amazonensis (strain ATCC BAA-1098 / SB2B) protein is Large ribosomal subunit protein uL15.